The following is a 509-amino-acid chain: Dol-P-Glc:Glc(2)Man(9)GlcNAc(2)-PP-Dol alpha-1,2-glucosyltransferase (509 aa).

Topologically, residues 1–4 are cytoplasmic; sequence MGKL. The chain crosses the membrane as a helical span at residues 5-25; it reads AVAAITSLWVIPMSIIVNHIV. Topologically, residues 26-57 are lumenal; it reads PEPYMDEIFHVPQAQQYCNGNFRSWDPMITTP. A helical membrane pass occupies residues 58 to 78; sequence PGLYYLSLAHVASLFPGMLLM. The Cytoplasmic portion of the chain corresponds to 79-99; it reads ENTSQSFSEACSTSVLRSTNA. A helical membrane pass occupies residues 100–120; it reads VSAVLCGVLVYEIIRFLGPNL. Over 121–124 the chain is Lumenal; it reads SDRK. The chain crosses the membrane as a helical span at residues 125-145; sequence ATFMALVMSLYPLHWFFTFLY. Topologically, residues 146-170 are cytoplasmic; the sequence is YTDVASLTAVLAMYLTCLKRRYVLS. Residues 171 to 191 form a helical membrane-spanning segment; it reads ALFGTLAVFIRQTNVVWMLFV. The Lumenal portion of the chain corresponds to 192 to 285; the sequence is ACSGILDFTL…KWRILIKFSP (94 aa). Residues 210–254 are disordered; sequence QEVNQELHQSSNKKGATLRSNLRKRKSDISSDTSDPFNHGQTVPS. Composition is skewed to polar residues over residues 215 to 229 and 239 to 254; these read ELHQSSNKKGATLRS and SSDTSDPFNHGQTVPS. The chain crosses the membrane as a helical span at residues 286-306; that stretch reads FIFVVVAFGIFILWNGGIVLG. Topologically, residues 307-311 are cytoplasmic; that stretch reads AKEAH. Residues 312-332 form a helical membrane-spanning segment; that stretch reads VVSLHFAQIMYFSLVSALFTA. Topologically, residues 333-355 are lumenal; the sequence is PLHFSVNQLRHQFHQLHRNWSLS. N-linked (GlcNAc...) asparagine glycosylation occurs at asparagine 351. A helical membrane pass occupies residues 356–376; it reads LILTLVALVAGFVSVHFFSLA. Residues 377–400 lie on the Cytoplasmic side of the membrane; sequence HPYLLADNRHYPFYLWRKIINAHW. Residues 401-421 form a helical membrane-spanning segment; that stretch reads LMKYILVPVYVYSWFSILTLL. The Lumenal segment spans residues 422 to 428; sequence AKTRRQT. A helical transmembrane segment spans residues 429 to 449; sequence WILVYFLATCGVLVPTPLIEF. The Cytoplasmic segment spans residues 450 to 472; it reads RYYTIPFYLFMLHSCVRSSSFAT. Residues 473-493 traverse the membrane as a helical segment; that stretch reads WLLIGTIFVSINVFTMAMFLF. Residues 494 to 509 are Lumenal-facing; that stretch reads RPFKWSHEDGVQRFIW.

This sequence belongs to the ALG10 glucosyltransferase family.

Its subcellular location is the endoplasmic reticulum membrane. The enzyme catalyses an alpha-D-Glc-(1-&gt;3)-alpha-D-Glc-(1-&gt;3)-alpha-D-Man-(1-&gt;2)-alpha-D-Man-(1-&gt;2)-alpha-D-Man-(1-&gt;3)-[alpha-D-Man-(1-&gt;2)-alpha-D-Man-(1-&gt;3)-[alpha-D-Man-(1-&gt;2)-alpha-D-Man-(1-&gt;6)]-alpha-D-Man-(1-&gt;6)]-beta-D-Man-(1-&gt;4)-beta-D-GlcNAc-(1-&gt;4)-alpha-D-GlcNAc-diphospho-di-trans,poly-cis-dolichol + a di-trans,poly-cis-dolichyl beta-D-glucosyl phosphate = a alpha-D-Glc-(1-&gt;2)-alpha-D-Glc-(1-&gt;3)-alpha-D-Glc-(1-&gt;3)-alpha-D-Man-(1-&gt;2)-alpha-D-Man-(1-&gt;2)-alpha-D-Man-(1-&gt;3)-[alpha-D-Man-(1-&gt;2)-alpha-D-Man-(1-&gt;3)-[alpha-D-Man-(1-&gt;2)-alpha-D-Man-(1-&gt;6)]-alpha-D-Man-(1-&gt;6)]-beta-D-Man-(1-&gt;4)-beta-D-GlcNAc-(1-&gt;4)-alpha-D-GlcNAc-diphospho-di-trans,poly-cis-dolichol + a di-trans,poly-cis-dolichyl phosphate + H(+). The protein operates within protein modification; protein glycosylation. Its function is as follows. Dol-P-Glc:Glc(2)Man(9)GlcNAc(2)-PP-Dol alpha-1,2-glucosyltransferase that operates in the biosynthetic pathway of dolichol-linked oligosaccharides, the glycan precursors employed in protein asparagine (N)-glycosylation. The assembly of dolichol-linked oligosaccharides begins on the cytosolic side of the endoplasmic reticulum membrane and finishes in its lumen. The sequential addition of sugars to dolichol pyrophosphate produces dolichol-linked oligosaccharides containing fourteen sugars, including two GlcNAcs, nine mannoses and three glucoses. Once assembled, the oligosaccharide is transferred from the lipid to nascent proteins by oligosaccharyltransferases. In the lumen of the endoplasmic reticulum, adds the third and last glucose residue from dolichyl phosphate glucose (Dol-P-Glc) onto the lipid-linked oligosaccharide intermediate Glc(2)Man(9)GlcNAc(2)-PP-Dol to produce Glc(3)Man(9)GlcNAc(2)-PP-Dol. The protein is Dol-P-Glc:Glc(2)Man(9)GlcNAc(2)-PP-Dol alpha-1,2-glucosyltransferase of Arabidopsis thaliana (Mouse-ear cress).